The following is a 154-amino-acid chain: Transcription antitermination protein NusB (154 aa).

This sequence belongs to the NusB family.

Functionally, involved in transcription antitermination. Required for transcription of ribosomal RNA (rRNA) genes. Binds specifically to the boxA antiterminator sequence of the ribosomal RNA (rrn) operons. This is Transcription antitermination protein NusB from Enterococcus faecalis (strain ATCC 700802 / V583).